Consider the following 620-residue polypeptide: tRNA uridine 5-carboxymethylaminomethyl modification enzyme MnmG (620 aa).

Residues Gly-13–Gly-18, Val-125, and Ser-182 contribute to the FAD site. Gly-280–Phe-294 provides a ligand contact to NAD(+). An FAD-binding site is contributed by Asn-377.

The protein belongs to the MnmG family. In terms of assembly, homodimer. Heterotetramer of two MnmE and two MnmG subunits. FAD serves as cofactor.

Its subcellular location is the cytoplasm. In terms of biological role, NAD-binding protein involved in the addition of a carboxymethylaminomethyl (cmnm) group at the wobble position (U34) of certain tRNAs, forming tRNA-cmnm(5)s(2)U34. In Sulfurihydrogenibium sp. (strain YO3AOP1), this protein is tRNA uridine 5-carboxymethylaminomethyl modification enzyme MnmG.